The sequence spans 293 residues: Acetylglutamate kinase (293 aa).

Substrate-binding positions include 68 to 69 (GG), Arg-90, and Asn-189.

The protein belongs to the acetylglutamate kinase family. ArgB subfamily.

It localises to the cytoplasm. It catalyses the reaction N-acetyl-L-glutamate + ATP = N-acetyl-L-glutamyl 5-phosphate + ADP. It functions in the pathway amino-acid biosynthesis; L-arginine biosynthesis; N(2)-acetyl-L-ornithine from L-glutamate: step 2/4. In terms of biological role, catalyzes the ATP-dependent phosphorylation of N-acetyl-L-glutamate. The polypeptide is Acetylglutamate kinase (Caldicellulosiruptor bescii (strain ATCC BAA-1888 / DSM 6725 / KCTC 15123 / Z-1320) (Anaerocellum thermophilum)).